Here is a 384-residue protein sequence, read N- to C-terminus: MSLQAIKYADNQLQIIDQLQLPFVTEYIPIRSAQDGWHAIKEMRVRGAPAIAIVAILSLAVELSEIQTAGKLSSSSEEVGLFIIEKLHYLVTSRPTAVNLADAARKFETMVTEHTKTQGSTGQSLVAAYLQEAELMLVHDLSDNKNIGAYGAKWILERAATEGQAKVNVLTHCNTGSLATAGYGTALGVIRSLHEGNALNRVYCTETRPYNQGARLTAYELVHEKMPATLITDSMAASLLAKPESKVSAIVVGADRVAANGDTANKIGTYALAVLAKYHGVKFLVAAPRTTIDRGTPSGNEIVIEERAPSEVTTIKGPLQGRVGDALQMETIQLAATGIDVWNPAFDVTPAALIDAVITEKGVVEKGSDGHFHFDALFDESSSS.

Asp-255 (proton donor) is an active-site residue.

This sequence belongs to the eIF-2B alpha/beta/delta subunits family. MtnA subfamily.

The protein resides in the cytoplasm. Its subcellular location is the nucleus. The catalysed reaction is 5-(methylsulfanyl)-alpha-D-ribose 1-phosphate = 5-(methylsulfanyl)-D-ribulose 1-phosphate. It participates in amino-acid biosynthesis; L-methionine biosynthesis via salvage pathway; L-methionine from S-methyl-5-thio-alpha-D-ribose 1-phosphate: step 1/6. Catalyzes the interconversion of methylthioribose-1-phosphate (MTR-1-P) into methylthioribulose-1-phosphate (MTRu-1-P). The polypeptide is Methylthioribose-1-phosphate isomerase (mri1) (Talaromyces marneffei (strain ATCC 18224 / CBS 334.59 / QM 7333) (Penicillium marneffei)).